Consider the following 447-residue polypeptide: Probable 7-dehydrocholesterol reductase (447 aa).

8 helical membrane passes run 24–44, 71–91, 102–124, 133–153, 157–177, 244–264, 281–301, and 309–329; these read LTTA…YLIT, IPSF…FQLI, FVPH…LVYY, IITH…PTII, WGSI…LAYF, YVSN…VDFF, FGWM…TLQA, and IDLS…GYII. Residues K337, R341, I367, W372, and 379-380 contribute to the NADP(+) site; that span reads NY. A helical transmembrane segment spans residues 393–413; sequence ACGFSHFIPYFYCVYMTILLV. Residues D419, 423-427, and Y434 each bind NADP(+); that span reads CSRKY.

This sequence belongs to the ERG4/ERG24 family.

Its subcellular location is the membrane. It carries out the reaction cholesterol + NADP(+) = 7-dehydrocholesterol + NADPH + H(+). The protein operates within steroid biosynthesis; cholesterol biosynthesis. Functionally, catalyzes the last step of the cholesterol synthesis pathway, which transforms cholesta-5,7-dien-3beta-ol (7-dehydrocholesterol,7-DHC) into cholesterol by reducing the C7-C8 double bond of its sterol core. This Acanthamoeba polyphaga (Amoeba) protein is Probable 7-dehydrocholesterol reductase (DHCR7).